A 287-amino-acid polypeptide reads, in one-letter code: Cyclopropane mycolic acid synthase 3 (287 aa).

S-adenosyl-L-methionine-binding positions include 33 to 34 (YS), 68 to 76 (LLDIGCGWG), 94 to 99 (TLSENQ), and 123 to 124 (WE). Residue Cys269 is part of the active site.

The protein belongs to the CFA/CMAS family. As to quaternary structure, homodimer.

The protein localises to the cytoplasm. The catalysed reaction is a 1-acyl-2-(9Z)-enoyl-sn-glycero-3-phospholipid + S-adenosyl-L-methionine = a 1-acyl-2-(9-cyclopronane)-acyl-sn-glycero-3-phospholipid + S-adenosyl-L-homocysteine + H(+). Its pathway is lipid metabolism; mycolic acid biosynthesis. Involved in the phagosome maturation block (PMB). Catalyzes the conversion of a double bond to a cyclopropane ring at the proximal position of an alpha mycolic acid via the transfer of a methylene group from S-adenosyl-L-methionine. It can use cis, cis 11,14-eicosadienoic acid and linoelaidic acid as substrate. Cyclopropanated mycolic acids are key factors participating in cell envelope permeability, host immunomodulation and persistence. The sequence is that of Cyclopropane mycolic acid synthase 3 (pcaA) from Mycobacterium tuberculosis (strain CDC 1551 / Oshkosh).